The chain runs to 456 residues: GTPase Der (456 aa).

EngA-type G domains lie at 3-167 (FTIA…PPSD) and 185-360 (IRVA…AVWN). Residues 9 to 16 (GRPNVGKS), 56 to 60 (DTAGL), and 119 to 122 (NKSE) each bind GTP. Residues 162 to 181 (IVPPSDDEDDEREETDEERA) are disordered. Over residues 166–178 (SDDEDDEREETDE) the composition is skewed to acidic residues. Residues 191-198 (GRPNAGKS), 238-242 (DTAGL), and 303-306 (NKWD) each bind GTP. Residues 361 to 445 (RRVPTAALNR…PVRITLREKA (85 aa)) form the KH-like domain.

The protein belongs to the TRAFAC class TrmE-Era-EngA-EngB-Septin-like GTPase superfamily. EngA (Der) GTPase family. As to quaternary structure, associates with the 50S ribosomal subunit.

Its function is as follows. GTPase that plays an essential role in the late steps of ribosome biogenesis. The sequence is that of GTPase Der from Bradyrhizobium sp. (strain ORS 278).